The chain runs to 140 residues: uncharacterized protein (140 aa).

In terms of domain architecture, HTH cro/C1-type spans 26–80; it reads IRSQRETAHVSMRQLAERSGVSNPYLSQVERGLRKPSADVLSQIAKALRVSAEVL. Residues 37 to 56 constitute a DNA-binding region (H-T-H motif); the sequence is MRQLAERSGVSNPYLSQVER.

This is an uncharacterized protein from Mycobacterium tuberculosis (strain ATCC 25618 / H37Rv).